A 125-amino-acid chain; its full sequence is Holo-[acyl-carrier-protein] synthase (125 aa).

2 residues coordinate Mg(2+): Asp-8 and Glu-57.

It belongs to the P-Pant transferase superfamily. AcpS family. Mg(2+) serves as cofactor.

Its subcellular location is the cytoplasm. It catalyses the reaction apo-[ACP] + CoA = holo-[ACP] + adenosine 3',5'-bisphosphate + H(+). Functionally, transfers the 4'-phosphopantetheine moiety from coenzyme A to a Ser of acyl-carrier-protein. The sequence is that of Holo-[acyl-carrier-protein] synthase from Nitrosomonas europaea (strain ATCC 19718 / CIP 103999 / KCTC 2705 / NBRC 14298).